An 842-amino-acid polypeptide reads, in one-letter code: Cation/H(+) antiporter 20 (842 aa).

The next 12 membrane-spanning stretches (helical) occupy residues 26 to 46, 55 to 75, 86 to 106, 122 to 142, 155 to 175, 193 to 213, 228 to 248, 283 to 303, 320 to 340, 353 to 373, 380 to 400, and 413 to 433; these read FPLL…LAVL, VIAE…RNMA, MPIL…LVGL, GIAV…AFVI, YAEF…PVLA, MAAA…AVAL, LVSL…LVVI, FATD…GLTI, FVSG…TDVA, LVVV…AVMV, ALTL…VLNI, and AILV…VMAI. Positions 585–595 are enriched in basic and acidic residues; sequence DHGHSHHHQDG. The segment at 585–605 is disordered; the sequence is DHGHSHHHQDGGGDGNVPENV.

The protein belongs to the monovalent cation:proton antiporter 2 (CPA2) transporter (TC 2.A.37) family. CHX (TC 2.A.37.4) subfamily. In terms of tissue distribution, expressed in leaves and stems. Preferentially expressed in guards cells.

It is found in the endomembrane system. Its function is as follows. Operates as a K(+)/H(+) antiporter that maintains K(+) homeostasis in guard cells and could regulate pH. Plays a critical role in osmoregulation through the control of stomates opening. This chain is Cation/H(+) antiporter 20 (CHX20), found in Arabidopsis thaliana (Mouse-ear cress).